Reading from the N-terminus, the 92-residue chain is Large ribosomal subunit protein uL24c (92 aa).

It belongs to the universal ribosomal protein uL24 family. In terms of assembly, part of the 50S ribosomal subunit.

The protein resides in the plastid. Its subcellular location is the chloroplast. Functionally, one of two assembly initiator proteins, it binds directly to the 5'-end of the 23S rRNA, where it nucleates assembly of the 50S subunit. The polypeptide is Large ribosomal subunit protein uL24c (rpl24) (Gracilaria tenuistipitata var. liui (Red alga)).